Here is a 446-residue protein sequence, read N- to C-terminus: Sensor-type histidine kinase PrrB (446 aa).

2 helical membrane passes run V19–V39 and L151–F171. Residues A172–N222 enclose the HAMP domain. Residues V237–S446 enclose the Histidine kinase domain. Residue H240 is modified to Phosphohistidine; by autocatalysis.

In terms of processing, autophosphorylated.

Its subcellular location is the cell membrane. The enzyme catalyses ATP + protein L-histidine = ADP + protein N-phospho-L-histidine.. In terms of biological role, member of the two-component regulatory system PrrB/PrrA that is involved specifically in early intracellular multiplication of Mycobacterium and is essential for its viability. Functions as a sensor protein kinase which is autophosphorylated at a histidine residue and transfers its phosphate group to the conserved aspartic acid residue in the regulatory domain of PrrA. In turn, PrrA binds to the upstream promoter regions of target genes including itself to positively regulate their expression. The sequence is that of Sensor-type histidine kinase PrrB (prrB) from Mycobacterium bovis (strain ATCC BAA-935 / AF2122/97).